We begin with the raw amino-acid sequence, 586 residues long: MAAPGSEKSSKKKTEKKLAAREEAKLLAGFMGVMNSMRKQRTLCDVILMVQERRIPAHRVVLASASHFFNLMFTTNMLESKSFEVELKDAEPDIIEQLVEFAYTARISVNSNNVQSLLDAANQYQIEPVKKMCVDFLKEQVDASNCLGISVLAECLDCPELKATADDFIHQHFTEVYKTDEFLQLDVKRVTHLLNQDTLTVRAEDQVYDAAVRWLKYDEPNRQPYMVDILAKVRFPLISKNFLSKTVQAEPLIQDNPECLKMVISGMRYHLLSPEDREELVEGTRPRRKKHDYRIALFGGSQPQSCRYFNPKDYSWTDIRCPFEKRRDAACVFWDNVVYILGGSQLFPIKRMDCYNVVKDSWYSKLGPPTPRDSLAACAAEGKIYTSGGSEVGNSALYLFECYDTRTESWHTKPSMLTQRCSHGMVEANGLIYVCGGSLGNNVSRRVLNSCEVYDPATETWTELCPMIEARKNHGLVFVKDKIFAVGGQNGLGGLDNVEYYDIKMNEWKMVSPMPWKGVTVKCAAVGSIVYVLAGFQGVGRLGHILEYNTETDKWIANSKVRAFPVTSCLICVVDTCGANEETLET.

The 68-residue stretch at 44 to 111 (CDVILMVQER…AYTARISVNS (68 aa)) folds into the BTB domain. The BACK domain maps to 146 to 248 (CLGISVLAEC…SKNFLSKTVQ (103 aa)). Kelch repeat units follow at residues 294–336 (RIAL…FWDN), 337–382 (VVYI…AAEG), 383–430 (KIYT…EANG), 431–481 (LIYV…FVKD), 483–528 (IFAV…AVGS), and 530–575 (VYVL…CVVD).

Homodimer. Component of the BCR(KLHL7) E3 ubiquitin ligase complex.

The protein localises to the nucleus. It localises to the cytoplasm. The protein operates within protein modification; protein ubiquitination. In terms of biological role, substrate-specific adapter of a BCR (BTB-CUL3-RBX1) E3 ubiquitin ligase complex. The BCR(KLHL7) complex acts by mediating ubiquitination and subsequent degradation of substrate proteins. Probably mediates 'Lys-48'-linked ubiquitination. The sequence is that of Kelch-like protein 7 (KLHL7) from Gallus gallus (Chicken).